The chain runs to 226 residues: Glutathione peroxidase 3 (226 aa).

Positions 1 to 24 (MARLLQASCLLSLLLAGFVPQSRG) are cleaved as a signal peptide. Selenocysteine 73 is an active-site residue. Residue selenocysteine 73 is a non-standard amino acid, selenocysteine.

Belongs to the glutathione peroxidase family. As to quaternary structure, homotetramer. As to expression, secreted in plasma.

The protein localises to the secreted. It catalyses the reaction 2 glutathione + H2O2 = glutathione disulfide + 2 H2O. It carries out the reaction tert-butyl hydroperoxide + 2 glutathione = tert-butanol + glutathione disulfide + H2O. Its function is as follows. Protects cells and enzymes from oxidative damage, by catalyzing the reduction of hydrogen peroxide, lipid peroxides and organic hydroperoxide, by glutathione. In Hylobates lar (Lar gibbon), this protein is Glutathione peroxidase 3.